A 207-amino-acid chain; its full sequence is Large ribosomal subunit protein uL4 (207 aa).

The interval 52–76 (KNTSLVSGGGKKPWKQKGTGRARQG) is disordered.

It belongs to the universal ribosomal protein uL4 family. As to quaternary structure, part of the 50S ribosomal subunit.

In terms of biological role, one of the primary rRNA binding proteins, this protein initially binds near the 5'-end of the 23S rRNA. It is important during the early stages of 50S assembly. It makes multiple contacts with different domains of the 23S rRNA in the assembled 50S subunit and ribosome. Functionally, forms part of the polypeptide exit tunnel. This Myxococcus xanthus (strain DK1622) protein is Large ribosomal subunit protein uL4.